A 40-amino-acid chain; its full sequence is Ribosome-inactivating protein saporin-1 (40 aa).

It belongs to the ribosome-inactivating protein family. Type 1 RIP subfamily.

The catalysed reaction is Endohydrolysis of the N-glycosidic bond at one specific adenosine on the 28S rRNA.. Functionally, ribosome-inactivating protein of type 1, inhibits protein synthesis in animal cells. In Saponaria officinalis (Common soapwort), this protein is Ribosome-inactivating protein saporin-1 (SAP1).